Reading from the N-terminus, the 70-residue chain is U2-agatoxin-Ao1q (70 aa).

Positions 1-20 (MRSIISLLLISAMVFSMIAA) are cleaved as a signal peptide. Residues 21 to 34 (VPEEEGLQLSEDER) constitute a propeptide that is removed on maturation. 2 disulfides stabilise this stretch: Cys44-Cys58 and Cys52-Cys68. A Leucine amide modification is found at Leu69.

It belongs to the neurotoxin 01 (U2-agtx) family. Post-translationally, does not contain a cysteine at position 53 which disrupts the cysteine framework. Expressed by the venom gland.

The protein resides in the secreted. Its function is as follows. Insect active toxin causing rapid but reversible paralysis in crickets. No activity shown in mammals. Does not show effect on mammalian voltage-gated calcium channels. The polypeptide is U2-agatoxin-Ao1q (Agelena orientalis (Funnel-web spider)).